The sequence spans 226 residues: Protein YAE1 homolog (226 aa).

Residues 45 to 85 are deca-GX3 motif; required for interaction with LTO1; it reads GYRDGIDAGKAVTLQQGFNQGYKKGAEVILNYGRLRGTLSA.

As to quaternary structure, forms a complex with LTO1.

The protein resides in the cytoplasm. The protein localises to the nucleus. In terms of biological role, the complex LTO1:YAE1 functions as a target specific adapter that probably recruits apo-ABCE1 to the cytosolic iron-sulfur protein assembly (CIA) complex machinery. May be required for biogenesis of the large ribosomal subunit and initiation of translation. This Homo sapiens (Human) protein is Protein YAE1 homolog.